A 408-amino-acid chain; its full sequence is Tyrosine--tRNA ligase (408 aa).

The short motif at 50–59 (PTGKDLTLGH) is the 'HIGH' region element. Residues 234–238 (KMSKS) carry the 'KMSKS' region motif. Lys237 is a binding site for ATP. Residues 346 to 407 (MQAARVLFTA…GKRKYGRVVL (62 aa)) form the S4 RNA-binding domain.

This sequence belongs to the class-I aminoacyl-tRNA synthetase family. TyrS type 2 subfamily. As to quaternary structure, homodimer.

Its subcellular location is the cytoplasm. It catalyses the reaction tRNA(Tyr) + L-tyrosine + ATP = L-tyrosyl-tRNA(Tyr) + AMP + diphosphate + H(+). Functionally, catalyzes the attachment of tyrosine to tRNA(Tyr) in a two-step reaction: tyrosine is first activated by ATP to form Tyr-AMP and then transferred to the acceptor end of tRNA(Tyr). The polypeptide is Tyrosine--tRNA ligase (Symbiobacterium thermophilum (strain DSM 24528 / JCM 14929 / IAM 14863 / T)).